A 152-amino-acid chain; its full sequence is ARL14 effector protein-like (152 aa).

A disordered region spans residues 1-21; it reads MNEQSEKNNSIQERHTDHSFP.

In Homo sapiens (Human), this protein is ARL14 effector protein-like (ARL14EPL).